Consider the following 140-residue polypeptide: Profilin-2 (140 aa).

Ala2 carries the post-translational modification N-acetylalanine.

It belongs to the profilin family. As to quaternary structure, occurs in many kinds of cells as a complex with monomeric actin in a 1:1 ratio. Interacts with PFN2. Interacts with ACTMAP (via N-terminus); the interaction may facilitate efficient cleavage of the acetylated N-terminus of immature actin by ACTMAP.

It localises to the cytoplasm. It is found in the cytoskeleton. In terms of biological role, binds to actin and affects the structure of the cytoskeleton. At high concentrations, profilin prevents the polymerization of actin, whereas it enhances it at low concentrations. By binding to PIP2, it inhibits the formation of IP3 and DG. The polypeptide is Profilin-2 (PFN2) (Bos taurus (Bovine)).